A 330-amino-acid chain; its full sequence is DNA-directed RNA polymerase I subunit RPA43 (330 aa).

The disordered stretch occupies residues A251–Q330. 3 positions are modified to phosphoserine: S306, S318, and S325. A compositionally biased stretch (basic and acidic residues) spans H317–Q330.

Belongs to the eukaryotic RPA43 RNA polymerase subunit family. As to quaternary structure, component of the RNA polymerase I (Pol I) complex consisting of 13 subunits: a ten-subunit catalytic core composed of POLR1A/RPA1, POLR1B/RPA2, POLR1C/RPAC1, POLR1D/RPAC2, POLR1H/RPA12, POLR2E/RPABC1, POLR2F/RPABC2, POLR2H/RPABC3, POLR2K/RPABC4 and POLR2L/RPABC5; a mobile stalk subunit POLR1F/RPA43 protruding from the core and additional subunits homologous to general transcription factors POLR1E/RPA49 and POLR1G/RPA34. Interacts with RRN3/TIF-IA. Interacts with RRN3/TIF-IA. As to expression, widely expressed.

It is found in the nucleus. It localises to the nucleolus. Its function is as follows. Component of RNA polymerase I (Pol I), a DNA-dependent RNA polymerase which synthesizes ribosomal RNA precursors using the four ribonucleoside triphosphates as substrates. Through its association with RRN3/TIF-IA may be involved in recruitment of Pol I to rDNA promoters. This Mus musculus (Mouse) protein is DNA-directed RNA polymerase I subunit RPA43.